The primary structure comprises 310 residues: Malate dehydrogenase (310 aa).

Residues 7 to 12 (GAGHVG) and D32 each bind NAD(+). Positions 81 and 87 each coordinate substrate. NAD(+) contacts are provided by residues N94 and 117–119 (VSN). Positions 119 and 150 each coordinate substrate. H174 acts as the Proton acceptor in catalysis.

Belongs to the LDH/MDH superfamily. MDH type 3 family.

The catalysed reaction is (S)-malate + NAD(+) = oxaloacetate + NADH + H(+). Functionally, catalyzes the reversible oxidation of malate to oxaloacetate. The sequence is that of Malate dehydrogenase from Chlorobium phaeobacteroides (strain BS1).